The sequence spans 161 residues: Small ribosomal subunit protein uS9 (161 aa).

Residues 1–21 (MATLQSLADLNRANTQTSNPE) show a composition bias toward polar residues. A disordered region spans residues 1–25 (MATLQSLADLNRANTQTSNPENEAP).

The protein belongs to the universal ribosomal protein uS9 family.

In Methylorubrum extorquens (strain CM4 / NCIMB 13688) (Methylobacterium extorquens), this protein is Small ribosomal subunit protein uS9.